The sequence spans 88 residues: MEIQLINIGFGNIVSANRVVAIVSPESAPIKRIITDARDRGQLIDATYGRRTRAVIITDSSHVILSAIQPETVANRFVISRDHQTVDN.

Belongs to the RemA family.

This chain is Putative regulatory protein Npun_R3866, found in Nostoc punctiforme (strain ATCC 29133 / PCC 73102).